The following is a 246-amino-acid chain: MTQSTRILLGVNIDHVATLRQARGTRYPDPVKAALDAEEAGADGITVHLREDRRHIQERDVLLLKDVLQTRMNFEMGVTEEMLAFAERIRPAHICLVPETRQELTTEGGLDVAGQEARIRSAVERLAKIGCEVSLFIDADERQIAASKRVGAPAIELHTGRYADAQTPTEVAEELQRVADGVAFGLAQGLIVNAGHGLHYHNVEAVAAIKGINELNIGHALVAHALFVGFKAAVAEMKALIVAAAR.

N12 provides a ligand contact to 3-amino-2-oxopropyl phosphate. A 1-deoxy-D-xylulose 5-phosphate-binding site is contributed by 14-15 (DH). R23 is a 3-amino-2-oxopropyl phosphate binding site. Catalysis depends on H48, which acts as the Proton acceptor. Residues R50 and H55 each coordinate 1-deoxy-D-xylulose 5-phosphate. The Proton acceptor role is filled by E75. T105 is a 1-deoxy-D-xylulose 5-phosphate binding site. The Proton donor role is filled by H196. Residues G197 and 218–219 (GH) contribute to the 3-amino-2-oxopropyl phosphate site.

Belongs to the PNP synthase family. As to quaternary structure, homooctamer; tetramer of dimers.

It is found in the cytoplasm. It catalyses the reaction 3-amino-2-oxopropyl phosphate + 1-deoxy-D-xylulose 5-phosphate = pyridoxine 5'-phosphate + phosphate + 2 H2O + H(+). The protein operates within cofactor biosynthesis; pyridoxine 5'-phosphate biosynthesis; pyridoxine 5'-phosphate from D-erythrose 4-phosphate: step 5/5. Functionally, catalyzes the complicated ring closure reaction between the two acyclic compounds 1-deoxy-D-xylulose-5-phosphate (DXP) and 3-amino-2-oxopropyl phosphate (1-amino-acetone-3-phosphate or AAP) to form pyridoxine 5'-phosphate (PNP) and inorganic phosphate. The chain is Pyridoxine 5'-phosphate synthase from Pseudomonas savastanoi pv. phaseolicola (strain 1448A / Race 6) (Pseudomonas syringae pv. phaseolicola (strain 1448A / Race 6)).